Reading from the N-terminus, the 240-residue chain is Putative RING finger protein ORF96 (240 aa).

Residues C9–R44 form an RING-type 1 zinc finger. An RING-type 2; degenerate zinc finger spans residues C150–F202.

The sequence is that of Putative RING finger protein ORF96 from Ostreid herpesvirus 1 (isolate France) (OsHV-1).